The primary structure comprises 504 residues: Mitochondrial-processing peptidase subunit alpha (504 aa).

It belongs to the peptidase M16 family. Heterodimer of alpha and beta subunits, forming the mitochondrial processing protease (MPP) in which subunit alpha is involved in substrate recognition and binding and subunit beta is the catalytic subunit.

The protein resides in the mitochondrion inner membrane. It carries out the reaction a quinol + 2 Fe(III)-[cytochrome c](out) = a quinone + 2 Fe(II)-[cytochrome c](out) + 2 H(+)(out). Its function is as follows. Substrate recognition and binding subunit of the essential mitochondrial processing protease (MPP), which cleaves the mitochondrial sequence off newly imported precursors proteins. This is a component of the ubiquinol-cytochrome c reductase complex (complex III or cytochrome b-c1 complex), which is part of the mitochondrial respiratory chain. Mediates formation of the complex between cytochromes c and c1. The chain is Mitochondrial-processing peptidase subunit alpha (MPP) from Solanum tuberosum (Potato).